A 252-amino-acid polypeptide reads, in one-letter code: Ciliogenesis and planar polarity effector 2 (252 aa).

Residues 46–252 (QMNVDLVRYK…LRETSSEIIV (207 aa)) are small GTPase-like. GTP is bound by residues 62–67 (TGVGKS) and 173–176 (TKFD).

This sequence belongs to the small GTPase superfamily. Rab family.

The protein resides in the cytoplasm. Its subcellular location is the cytoskeleton. It localises to the cilium basal body. Potential effector of the planar cell polarity signaling pathway. Plays a role in targeted membrane trafficking most probably at the level of vesicle fusion with membranes. Involved in cilium biogenesis by regulating the transport of cargo proteins to the basal body and to the apical tips of cilia. More generally involved in exocytosis in secretory cells. This Danio rerio (Zebrafish) protein is Ciliogenesis and planar polarity effector 2 (cplane2).